Here is a 248-residue protein sequence, read N- to C-terminus: Putative TrmH family tRNA/rRNA methyltransferase (248 aa).

3 residues coordinate S-adenosyl-L-methionine: Gly-196, Ile-216, and Leu-225.

This sequence belongs to the class IV-like SAM-binding methyltransferase superfamily. RNA methyltransferase TrmH family.

This chain is Putative TrmH family tRNA/rRNA methyltransferase, found in Staphylococcus aureus (strain COL).